Consider the following 124-residue polypeptide: Fluoride-specific ion channel FluC (124 aa).

4 consecutive transmembrane segments (helical) span residues 4-24, 32-52, 68-88, and 96-116; these read VIFI…LSGW, AFPY…GLIM, GLTI…YETF, and LLIA…FTWL. Residues Gly-75 and Thr-78 each contribute to the Na(+) site.

Belongs to the fluoride channel Fluc/FEX (TC 1.A.43) family.

Its subcellular location is the cell inner membrane. It carries out the reaction fluoride(in) = fluoride(out). Na(+) is not transported, but it plays an essential structural role and its presence is essential for fluoride channel function. Its function is as follows. Fluoride-specific ion channel. Important for reducing fluoride concentration in the cell, thus reducing its toxicity. The sequence is that of Fluoride-specific ion channel FluC from Geotalea daltonii (strain DSM 22248 / JCM 15807 / FRC-32) (Geobacter daltonii).